A 596-amino-acid polypeptide reads, in one-letter code: Fc receptor-like protein 5 (596 aa).

A signal peptide spans 1-26; it reads MSGSFSPCVVFTQMWLTLLVVTPVNG. The Extracellular segment spans residues 27–496; sequence QHEAAQQSVV…MTKNRSVPMA (470 aa). Ig-like C2-type domains are found at residues 34–115, 106–199, 207–294, 296–384, and 398–483; these read SVVS…VEFS, PSMH…NTVV, PRPV…TAFI, PVQR…SFVS, and PVLT…IRIS. Cystine bridges form between Cys-55–Cys-99, Cys-137–Cys-181, and Cys-228–Cys-277. Residue Asn-324 is glycosylated (N-linked (GlcNAc...) asparagine). Cystine bridges form between Cys-325/Cys-373 and Cys-419/Cys-466. Asn-436 is a glycosylation site (N-linked (GlcNAc...) asparagine). The helical transmembrane segment at 497-517 threads the bilayer; it reads AGITVGLLIMAVGVFLFYCWF. Residues 518–596 are Cytoplasmic-facing; that stretch reads SRKAGGKPTS…RSRCQMAEKK (79 aa). Disordered regions lie at residues 522–544 and 561–596; these read GGKP…PTYY and EENV…AEKK. Positions 577–596 are enriched in basic and acidic residues; that stretch reads KHADQESESPRSRCQMAEKK.

In terms of assembly, interacts with CR2. Interacts with CD19. Post-translationally, phosphorylated on cytoplasmic tyrosines; required for interaction with protein tyrosine phosphatases and protein tyrosine kinases. Preferentially expressed in marginal zone B cells.

It localises to the cell membrane. Functionally, plays an important role in B-cell response to antigen that acts both as a negative or positive coreceptor. Inhibits B-cell receptor (BCR) signaling in the absence of CR2 stimulation but engagement with CR2 and the BCR lead to a superior calcium response compared to CR2 and BCR costimulation. May be involved in B-cell development and differentiation in peripheral lymphoid organs and may be useful markers of B-cell stages. May have an immunoregulatory role in marginal zone B-cells. May play a role in fertilization. This chain is Fc receptor-like protein 5 (Fcrl5), found in Mus musculus (Mouse).